The primary structure comprises 225 residues: MNLPDTLLPCQRPRERLLRLGAPLLNDAELLALCLRTGRHGCNALELAQRLLTRHGGLRGIFALSAQELCTEPGLGVAKACSLLVAPELSRRSIEETLLGRQAMKHPEEVRRYCLTALAHQPVEHCIALYLDQQLQLLACGELERGTLGRASVFPREVVREALRLHAGAIILAHNHPSGNPQPSAADCAFTQQLSQALALVDIRLVDHIIVARDQALSMAERGLI.

The 123-residue stretch at 103 to 225 folds into the MPN domain; it reads AMKHPEEVRR…ALSMAERGLI (123 aa). Residues His-174, His-176, and Asp-187 each contribute to the Zn(2+) site. The JAMM motif signature appears at 174–187; it reads HNHPSGNPQPSAAD.

The protein belongs to the UPF0758 family.

This chain is UPF0758 protein BAV2405, found in Bordetella avium (strain 197N).